The primary structure comprises 209 residues: MANEIPDLECQVRAGTGKGAARAARRANLVPGVVFGGDADPLAIQIPYNVLLKRLKAGRFKSTLFNLKVEGHDDVRVICRDVQRDVVKDLPTHFDLMRLRRTSKINLFIPVEFINEEECVGLKRGGVLTVVRAEVELVVTAGDIPEKLTVDLTGKAIGDVIHISDVTLPEGSKPTIDRDFVIANISAPSGLKSADDEAEGEDAEEAAAE.

The segment at 190–209 (GLKSADDEAEGEDAEEAAAE) is disordered. Acidic residues predominate over residues 196 to 209 (DEAEGEDAEEAAAE).

This sequence belongs to the bacterial ribosomal protein bL25 family. CTC subfamily. Part of the 50S ribosomal subunit; part of the 5S rRNA/L5/L18/L25 subcomplex. Contacts the 5S rRNA. Binds to the 5S rRNA independently of L5 and L18.

In terms of biological role, this is one of the proteins that binds to the 5S RNA in the ribosome where it forms part of the central protuberance. This chain is Large ribosomal subunit protein bL25, found in Ruegeria sp. (strain TM1040) (Silicibacter sp.).